A 488-amino-acid polypeptide reads, in one-letter code: Germacrene A hydroxylase (488 aa).

At 1-6 (MELSFT) the chain is on the cytoplasmic side. Residues 7–23 (TSIAVATIVFVLFKLAT) form a helical; Signal-anchor for type II membrane protein membrane-spanning segment. Residues 24–488 (RPKSNKKLLP…KTHLVLVPSF (465 aa)) are Lumenal-facing. 3 N-linked (GlcNAc...) asparagine glycosylation sites follow: Asn255, Asn260, and Asn379. Residue Cys432 coordinates heme.

This sequence belongs to the cytochrome P450 family. Heme is required as a cofactor.

It is found in the endoplasmic reticulum membrane. It catalyses the reaction (+)-(R)-germacrene A + 3 reduced [NADPH--hemoprotein reductase] + 3 O2 = germacra-1(10),4,11(13)-trien-12-oate + 3 oxidized [NADPH--hemoprotein reductase] + 4 H2O + 4 H(+). The protein operates within secondary metabolite biosynthesis; terpenoid biosynthesis. Involved in the biosynthesis of germacrene-derived sesquiterpene lactones. Catalyzes three consecutive oxidations of germacrene A to produce germacrene A acid. Could also catalyze the three-step oxidation of non-natural substrate amorphadiene to artemisinic acid. The chain is Germacrene A hydroxylase from Saussurea costus (Costus).